We begin with the raw amino-acid sequence, 300 residues long: MEGVLYKWTNYLTGWQPRWFVLDNGILSYYDSQDDVCKGSKGSIKMAVCEIKVHSADNTRMELIIPGEQHFYMKAVNAAERQRWLVALGSSKACLTDTRTKKEKEISETSESLKTKMSELRLYCDLLMQQVHTIQEFVHHDENHSSPSAENMNEASSLLSATCNTFITTLEECVKIANAKFKPEMFQLHHPDPLVSPVSPSPVQMMKRSVSHPGSCSSERSSHSIKEPVSTLHRLSQRRRRTYSDTDSCSDIPLEDPDRPVHCSKNTLNGDLASATIPEESRLMAKKQSESEDTLPSFSS.

A PH domain is found at 1–93 (MEGVLYKWTN…WLVALGSSKA (93 aa)). The tract at residues 1-100 (MEGVLYKWTN…SKACLTDTRT (100 aa)) is interaction with SACM1L. The interval 97 to 300 (DTRTKKEKEI…SEDTLPSFSS (204 aa)) is interaction with VAPA and VAPB. Residues 197–300 (PVSPSPVQMM…SEDTLPSFSS (104 aa)) are disordered. Phosphoserine is present on residues serine 236 and serine 244. Over residues 279 to 290 (EESRLMAKKQSE) the composition is skewed to basic and acidic residues.

Interacts with GTP-bound ARF1. Interacts with SACM1L and VAPA and/or VAPB to form a ternary complex. In terms of tissue distribution, widely expressed.

It is found in the golgi apparatus. Its subcellular location is the trans-Golgi network membrane. Its function is as follows. Plays a role in regulation of vesicular cargo transport from the trans-Golgi network (TGN) to the plasma membrane. Regulates Golgi phosphatidylinositol 4-phosphate (PtdIns(4)P) levels and activates the PtdIns(4)P phosphatase activity of SACM1L when it binds PtdIns(4)P in 'trans' configuration. Binds preferentially to PtdIns(4)P. Negatively regulates APOB secretion from hepatocytes. This Homo sapiens (Human) protein is Pleckstrin homology domain-containing family A member 3 (PLEKHA3).